The following is a 220-amino-acid chain: Homeobox-leucine zipper protein ATHB-21 (220 aa).

A disordered region spans residues 26-48 (VPQQGGEAKPTRRRKRKSKSVVV). Residues 58-117 (GWFRKRKLSDEQVRMLEISFEDDHKLESERKDRLASELGLDPRQVAVWFQNRRARWKNKR) constitute a DNA-binding region (homeobox). Residues 118–146 (VEDEYTKLKNAYETTVVEKCRLDSEVIHL) form a leucine-zipper region.

It belongs to the HD-ZIP homeobox family. Class I subfamily. As to expression, widely expressed.

It is found in the nucleus. Probable transcription factor. The chain is Homeobox-leucine zipper protein ATHB-21 (ATHB-21) from Arabidopsis thaliana (Mouse-ear cress).